Here is a 558-residue protein sequence, read N- to C-terminus: Pyrethroid hydrolase Ces2a (558 aa).

The signal sequence occupies residues 1–26; that stretch reads MPLARLPGWLCVVACGLLLLLQHVHG. Cysteines 95 and 122 form a disulfide. K209 carries the post-translational modification N6-succinyllysine. S227 acts as the Acyl-ester intermediate in catalysis. The N-linked (GlcNAc...) asparagine glycan is linked to N275. A disulfide bridge connects residues C279 and C290. K296 carries the N6-succinyllysine modification. Catalysis depends on E344, which acts as the Charge relay system. An N-linked (GlcNAc...) asparagine glycan is attached at N361. Residue H456 is the Charge relay system of the active site.

Belongs to the type-B carboxylesterase/lipase family.

The protein resides in the microsome. The catalysed reaction is (-)-trans-permethrin + H2O = (3-phenoxyphenyl)methanol + (1S,3R)-3-(2,2-dichlorovinyl)-2,2-dimethylcyclopropanecarboxylate + H(+). It carries out the reaction all-trans-retinyl hexadecanoate + H2O = all-trans-retinol + hexadecanoate + H(+). In terms of biological role, carboxylesterases that catalyzes the hydrolysis of pyrethroids pesticides. Hydrolyzes permethrin faster than cypermethrin. Hydrolyzes retinyl esters. In Mus musculus (Mouse), this protein is Pyrethroid hydrolase Ces2a.